An 816-amino-acid chain; its full sequence is Phosphatidylinositol 4-kinase beta (816 aa).

Disordered stretches follow at residues 1-30 (MGDT…GSLL), 99-120 (EEED…RRRR), and 248-318 (AHRK…SFSS). N-acetylglycine is present on Gly2. The interaction with ACBD3 stretch occupies residues 2–68 (GDTVVEPAPL…VKLLHGGVAV (67 aa)). The PIK helical domain maps to 52–242 (CQDVLEKVKL…GTKLRKLILS (191 aa)). Ser258 is modified (phosphoserine). Thr263 is modified (phosphothreonine). Ser266, Ser275, Ser277, Ser284, and Ser294 each carry phosphoserine. Polar residues-rich tracts occupy residues 278–297 (DATA…SNPK) and 306–318 (SSST…SFSS). Phosphoserine is present on Ser428. Position 438 is a phosphothreonine (Thr438). Position 511 is a phosphoserine (Ser511). Phosphothreonine occurs at positions 517 and 519. One can recognise a PI3K/PI4K catalytic domain in the interval 535–801 (EPWQEKVRRI…MVDGSMRSIT (267 aa)). The segment at 541-547 (VRRIREG) is G-loop. The interval 668-676 (QVKDRHNGN) is catalytic loop. Residues 687-711 (HIDFGFILSSSPRNLGFETSAFKLT) are activation loop.

The protein belongs to the PI3/PI4-kinase family. Type III PI4K subfamily. In terms of assembly, interacts with ARF1 and ARF3 in the Golgi complex, but not with ARF4, ARF5 or ARF6. Interacts with NCS1/FREQ in a calcium-independent manner. Interacts with CALN1/CABP8 and CALN2/CABP7; in a calcium-dependent manner; this interaction competes with NCS1/FREQ binding. Interacts with ACBD3. Interacts with ARMH3, YWHAB, YWHAE, YWHAG, YWHAH, YWHAQ, YWHAZ and SFN. Interacts with GGA2 (via VHS domain); the interaction is important for PI4KB location at the Golgi apparatus membrane. Interacts with ATG9A. Mg(2+) serves as cofactor. Requires Mn(2+) as cofactor.

It is found in the endomembrane system. The protein resides in the mitochondrion outer membrane. Its subcellular location is the rough endoplasmic reticulum membrane. It localises to the golgi apparatus. The protein localises to the golgi apparatus membrane. The catalysed reaction is a 1,2-diacyl-sn-glycero-3-phospho-(1D-myo-inositol) + ATP = a 1,2-diacyl-sn-glycero-3-phospho-(1D-myo-inositol 4-phosphate) + ADP + H(+). Its activity is regulated as follows. Inhibited by wortmannin. Increased kinase activity upon interaction with NCS1/FREQ. Phosphorylates phosphatidylinositol (PI) in the first committed step in the production of the second messenger inositol-1,4,5,-trisphosphate (PIP). May regulate Golgi disintegration/reorganization during mitosis, possibly via its phosphorylation. Involved in Golgi-to-plasma membrane trafficking. This chain is Phosphatidylinositol 4-kinase beta (PI4KB), found in Callithrix jacchus (White-tufted-ear marmoset).